Reading from the N-terminus, the 210-residue chain is Orotate phosphoribosyltransferase (210 aa).

5-phospho-alpha-D-ribose 1-diphosphate contacts are provided by residues arginine 96, lysine 100, histidine 102, and 122-130; that span reads DDLISTGGS. Position 126 (serine 126) interacts with orotate.

It belongs to the purine/pyrimidine phosphoribosyltransferase family. PyrE subfamily. As to quaternary structure, homodimer. Mg(2+) is required as a cofactor.

The enzyme catalyses orotidine 5'-phosphate + diphosphate = orotate + 5-phospho-alpha-D-ribose 1-diphosphate. Its pathway is pyrimidine metabolism; UMP biosynthesis via de novo pathway; UMP from orotate: step 1/2. Catalyzes the transfer of a ribosyl phosphate group from 5-phosphoribose 1-diphosphate to orotate, leading to the formation of orotidine monophosphate (OMP). This Levilactobacillus brevis (strain ATCC 367 / BCRC 12310 / CIP 105137 / JCM 1170 / LMG 11437 / NCIMB 947 / NCTC 947) (Lactobacillus brevis) protein is Orotate phosphoribosyltransferase.